Consider the following 641-residue polypeptide: Toxin TseL (641 aa).

As to quaternary structure, interacts with VgrG3; this interaction allows TseL secretion to target cells.

It localises to the secreted. Toxin secreted by the type VI (T6SS) secretion system that acts on prokaryotic as well as eukaryotic target cells. In Vibrio cholerae serotype O1 (strain ATCC 39315 / El Tor Inaba N16961), this protein is Toxin TseL.